A 282-amino-acid chain; its full sequence is Putative polysaccharide deacetylase YheN (282 aa).

A helical transmembrane segment spans residues 15–35 (LAFKFASLAVLCVLLLLMVIL). Residues 85–271 (KTVYLTFDDG…KLKEKGYSFG (187 aa)) form the NodB homology domain.

The protein belongs to the polysaccharide deacetylase family.

The protein resides in the cell membrane. The polypeptide is Putative polysaccharide deacetylase YheN (yheN) (Bacillus subtilis (strain 168)).